The sequence spans 465 residues: Phytase A (465 aa).

Residues 1–26 (MVTLTFLLSAAYLLSGRVSAAPSSAG) form the signal peptide. A disulfide bond links cysteine 30 and cysteine 39. Residues glutamine 49, tyrosine 50, arginine 80, histidine 81, arginine 84, and threonine 87 each contribute to the 1D-myo-inositol hexakisphosphate site. Intrachain disulfides connect cysteine 70-cysteine 412, cysteine 213-cysteine 463, cysteine 262-cysteine 280, and cysteine 434-cysteine 442. Histidine 81 functions as the Nucleophile in the catalytic mechanism. An N-linked (GlcNAc...) asparagine glycan is attached at asparagine 104. Arginine 164 contributes to the 1D-myo-inositol hexakisphosphate binding site. Asparagine 205 carries an N-linked (GlcNAc...) asparagine glycan. Position 209 (aspartate 209) interacts with 1D-myo-inositol hexakisphosphate. An N-linked (GlcNAc...) asparagine glycan is attached at asparagine 228. Residue lysine 299 coordinates 1D-myo-inositol hexakisphosphate. N-linked (GlcNAc...) asparagine glycosylation is found at asparagine 337 and asparagine 350. The 1D-myo-inositol hexakisphosphate site is built by histidine 359 and aspartate 360. Asparagine 374 is a glycosylation site (N-linked (GlcNAc...) asparagine).

This sequence belongs to the histidine acid phosphatase family. As to quaternary structure, monomer.

The protein localises to the secreted. The catalysed reaction is 1D-myo-inositol hexakisphosphate + H2O = 1D-myo-inositol 1,2,4,5,6-pentakisphosphate + phosphate. It carries out the reaction 1D-myo-inositol 1,2,4,5,6-pentakisphosphate + H2O = 1D-myo-inositol 1,2,5,6-tetrakisphosphate + phosphate. It catalyses the reaction 1D-myo-inositol 1,2,5,6-tetrakisphosphate + H2O = 1D-myo-inositol 1,2,6-trisphosphate + phosphate. The enzyme catalyses 1D-myo-inositol 1,2,6-trisphosphate + H2O = 1D-myo-inositol 1,2-bisphosphate + phosphate. The catalysed reaction is 1D-myo-inositol 1,2-bisphosphate + H2O = 1D-myo-inositol 2-phosphate + phosphate. In terms of biological role, catalyzes the phosphate monoester hydrolysis of phytic acid (myo-inositol hexakisphosphate), which results in the stepwise formation of myo-inositol pentakis-, tetrakis-, tris-, bis-, and monophosphates, as well as the liberation of inorganic phosphate. Myo-inositol 2-monophosphate is the end product. Has a broad substrate specificity and is also able to dephosphorylate other classic acid phosphatase substrates such as p-nitrophenyl phosphate, phenyl phosphate, fructose 1,6-bisphosphate, fructose 6-phosphate, glucose 6-phosphate, ribose 5-phosphate, alpha-glycerophosphate, beta-glycerophosphate, 3-phosphoglycerate, phosphoenolpyruvate, as well as ADP and ATP. The protein is Phytase A (phyA) of Aspergillus fumigatus (strain ATCC MYA-4609 / CBS 101355 / FGSC A1100 / Af293) (Neosartorya fumigata).